A 280-amino-acid polypeptide reads, in one-letter code: Trypsin zeta (280 aa).

Positions 1–22 are cleaved as a signal peptide; it reads MSSSWIVGLLAFLVSLVALTQG. A propeptide spans 23-38 (activation peptide); it reads LPLLEDLDEKSVPDGR. Positions 39–278 constitute a Peptidase S1 domain; it reads IVGGYATDIA…LRPWIDAVLA (240 aa). Cysteine 72 and cysteine 88 are disulfide-bonded. Catalysis depends on charge relay system residues histidine 87 and aspartate 134. 2 disulfide bridges follow: cysteine 198-cysteine 218 and cysteine 230-cysteine 254. Serine 234 (charge relay system) is an active-site residue.

The protein belongs to the peptidase S1 family.

Its subcellular location is the secreted. It is found in the extracellular space. It carries out the reaction Preferential cleavage: Arg-|-Xaa, Lys-|-Xaa.. The sequence is that of Trypsin zeta (zetaTry) from Drosophila melanogaster (Fruit fly).